A 54-amino-acid polypeptide reads, in one-letter code: Large ribosomal subunit protein bL33A (54 aa).

This sequence belongs to the bacterial ribosomal protein bL33 family.

In Mycolicibacterium paratuberculosis (strain ATCC BAA-968 / K-10) (Mycobacterium paratuberculosis), this protein is Large ribosomal subunit protein bL33A.